A 129-amino-acid polypeptide reads, in one-letter code: Follitropin subunit beta (129 aa).

The signal sequence occupies residues 1–20 (MKTAQFYVLFFCWKAIWCNG). 6 cysteine pairs are disulfide-bonded: C21–C69, C35–C84, C38–C122, C46–C100, C50–C102, and C105–C112. N25 and N42 each carry an N-linked (GlcNAc...) asparagine glycan.

The protein belongs to the glycoprotein hormones subunit beta family. As to quaternary structure, heterodimer. The active follitropin is a heterodimer composed of an alpha chain/CGA shared with other hormones and a unique beta chain/FSHB shown here.

Its subcellular location is the secreted. Its function is as follows. Together with the alpha chain CGA constitutes follitropin, the follicle-stimulating hormone, and provides its biological specificity to the hormone heterodimer. Binds FSHR, a G protein-coupled receptor, on target cells to activate downstream signaling pathways. Follitropin is involved in follicle development and spermatogenesis in reproductive organs. The sequence is that of Follitropin subunit beta (FSHB) from Trichosurus vulpecula (Brush-tailed possum).